Consider the following 124-residue polypeptide: MLRQFGGVFRNLRVPERTNALLFAQHKGDERHSGQRAFDGSKFRLEAKRCFTAICIITVARRDRLGVLVCGKNTASTLPYLPANRIFRLPKVQIRKMFPIGCATFLSREYIITALLVSYCHLCV.

This is an uncharacterized protein from Saccharomyces cerevisiae (strain ATCC 204508 / S288c) (Baker's yeast).